The following is a 63-amino-acid chain: Cytochrome c oxidase subunit 5A, mitochondrial (63 aa).

It belongs to the cytochrome c oxidase subunit 5A family. As to quaternary structure, component of the cytochrome c oxidase (complex IV, CIV), a multisubunit enzyme composed of a catalytic core of 3 subunits and several supernumerary subunits. The complex exists as a monomer or a dimer and forms supercomplexes (SCs) in the inner mitochondrial membrane with ubiquinol-cytochrome c oxidoreductase (cytochrome b-c1 complex, complex III, CIII).

It is found in the mitochondrion inner membrane. The protein operates within energy metabolism; oxidative phosphorylation. In terms of biological role, component of the cytochrome c oxidase, the last enzyme in the mitochondrial electron transport chain which drives oxidative phosphorylation. The respiratory chain contains 3 multisubunit complexes succinate dehydrogenase (complex II, CII), ubiquinol-cytochrome c oxidoreductase (cytochrome b-c1 complex, complex III, CIII) and cytochrome c oxidase (complex IV, CIV), that cooperate to transfer electrons derived from NADH and succinate to molecular oxygen, creating an electrochemical gradient over the inner membrane that drives transmembrane transport and the ATP synthase. Cytochrome c oxidase is the component of the respiratory chain that catalyzes the reduction of oxygen to water. Electrons originating from reduced cytochrome c in the intermembrane space (IMS) are transferred via the dinuclear copper A center (CU(A)) of subunit 2 and heme A of subunit 1 to the active site in subunit 1, a binuclear center (BNC) formed by heme A3 and copper B (CU(B)). The BNC reduces molecular oxygen to 2 water molecules using 4 electrons from cytochrome c in the IMS and 4 protons from the mitochondrial matrix. This Manduca sexta (Tobacco hawkmoth) protein is Cytochrome c oxidase subunit 5A, mitochondrial (COVA).